A 1141-amino-acid chain; its full sequence is Tetratricopeptide repeat protein 17 (1141 aa).

One copy of the TPR 1 repeat lies at 295–328 (FTSYYTLGNIYAMLGEYNHSVLCYDHALQARPGF). The stretch at 340 to 382 (CQQKLEQKLEAQHRSLQRTLNELKEYQKQHDHYLRQQEILEKH) forms a coiled coil. TPR repeat units lie at residues 619–652 (WLIL…APLQ), 689–722 (PLTF…TTKC), 1014–1048 (SWVL…APHQ), 1051–1084 (DVPL…APHF), and 1085–1118 (AVNH…QPEF).

Belongs to the TTC17 family. In terms of assembly, interacts with CATIP. In terms of tissue distribution, expressed in germ cells as well as in somatic cells of the testis (at protein level).

The protein resides in the cytoplasm. Its subcellular location is the cell membrane. It localises to the cytoskeleton. Functionally, plays a role in primary ciliogenesis by modulating actin polymerization. The chain is Tetratricopeptide repeat protein 17 (TTC17) from Homo sapiens (Human).